Consider the following 301-residue polypeptide: Probable alpha-L-glutamate ligase 1 (301 aa).

Residues 104–287 (LQLLSRKGIG…VTEPIVEYIE (184 aa)) form the ATP-grasp domain. ATP-binding positions include K141, 178-179 (EY), D187, and 211-213 (RSN). D248, E260, and N262 together coordinate Mg(2+). Mn(2+) is bound by residues D248, E260, and N262.

This sequence belongs to the RimK family. Mg(2+) serves as cofactor. The cofactor is Mn(2+).

This Shewanella oneidensis (strain ATCC 700550 / JCM 31522 / CIP 106686 / LMG 19005 / NCIMB 14063 / MR-1) protein is Probable alpha-L-glutamate ligase 1.